The primary structure comprises 83 residues: MSGSTGERSFADIITSIRYWVIHSITIPSLFIAGWLFVSTGLAYDVFGSPRPNEYFTENRQGIPLITGRFDPLEQLDEFSRSF.

A helical membrane pass occupies residues 21 to 35; sequence VIHSITIPSLFIAGW. Heme is bound at residue histidine 23.

This sequence belongs to the PsbE/PsbF family. In terms of assembly, heterodimer of an alpha subunit and a beta subunit. PSII is composed of 1 copy each of membrane proteins PsbA, PsbB, PsbC, PsbD, PsbE, PsbF, PsbH, PsbI, PsbJ, PsbK, PsbL, PsbM, PsbT, PsbX, PsbY, PsbZ, Psb30/Ycf12, at least 3 peripheral proteins of the oxygen-evolving complex and a large number of cofactors. It forms dimeric complexes. Heme b is required as a cofactor.

It localises to the plastid. The protein resides in the chloroplast thylakoid membrane. In terms of biological role, this b-type cytochrome is tightly associated with the reaction center of photosystem II (PSII). PSII is a light-driven water:plastoquinone oxidoreductase that uses light energy to abstract electrons from H(2)O, generating O(2) and a proton gradient subsequently used for ATP formation. It consists of a core antenna complex that captures photons, and an electron transfer chain that converts photonic excitation into a charge separation. This chain is Cytochrome b559 subunit alpha, found in Daucus carota (Wild carrot).